The sequence spans 709 residues: ATP-dependent zinc metalloprotease YME1 homolog (709 aa).

A disordered region spans residues 152-182 (FTSDTSSTVSSTPSLNHSLQNSMPPSTPTPP). Residues 153–165 (TSDTSSTVSSTPS) are compositionally biased toward low complexity. The helical transmembrane segment at 217-239 (IFKFIAGLSVASYFVLLGMSIFA) threads the bilayer. 307–314 (GPPGTGKT) is an ATP binding site. His530 is a binding site for Zn(2+). Glu531 is a catalytic residue. Zn(2+) is bound by residues His534 and Asp608.

This sequence in the N-terminal section; belongs to the AAA ATPase family. The protein in the C-terminal section; belongs to the peptidase M41 family. It depends on Zn(2+) as a cofactor.

The protein localises to the mitochondrion membrane. Putative ATP-dependent protease. This chain is ATP-dependent zinc metalloprotease YME1 homolog, found in Schizosaccharomyces pombe (strain 972 / ATCC 24843) (Fission yeast).